A 524-amino-acid polypeptide reads, in one-letter code: Zinc finger protein 346 (524 aa).

Matrin-type zinc fingers lie at residues 34–64, 92–126, 162–192, 226–260, 286–316, 343–373, and 400–430; these read TQCK…KVRR, DRSK…LRLR, KFCK…QETK, GKGF…LMSM, FSCD…HLKS, FSCD…HLMS, and FSCD…QLMS. C36, C39, H52, H58, C97, C100, H113, and H119 together coordinate Zn(2+). 2 disordered regions span residues 453–486 and 494–513; these read SAGG…GSLP and PLYP…TMSP. Positions 476-486 are enriched in low complexity; that stretch reads PKGPSSFGSLP.

The protein localises to the nucleus. The protein resides in the cytoplasm. In terms of biological role, binds preferentially to dsRNA, but also to RNA-DNA hybrids. The chain is Zinc finger protein 346 from Xenopus laevis (African clawed frog).